The sequence spans 239 residues: MAMRTRAEKRMRKFLIEQLKTRQQNGARIAQGKKSEHELIKNNLGPQVFVFRNLFSGQVLYSQVPAYHENQINQQFLSPNWQNRKPSRRQDLWKIMCVVNFNNYEYAIAAYKGLVDLRKTRDVVQKKEANEMRKKNDDGNIWYSGQFRPTYTQEAVADLTHVIDEFELEGTKIFWANEWHRGDDKHWRADLVEHDKLPVYDPRHQTVLLDIMREKAIEAFRENNTSEETIENATEPETA.

It belongs to the mitochondrion-specific ribosomal protein mL67 family. Component of the mitochondrial large ribosomal subunit (mt-LSU).

The protein localises to the nucleus. The protein resides in the mitochondrion. Functionally, component of the mitochondrial ribosome (mitoribosome), a dedicated translation machinery responsible for the synthesis of mitochondrial genome-encoded proteins, including at least some of the essential transmembrane subunits of the mitochondrial respiratory chain. The mitoribosomes are attached to the mitochondrial inner membrane and translation products are cotranslationally integrated into the membrane. mL67/MHR1 also has extraribosomal functions, being involved in regulation of mitochondrial DNA recombination, maintenance and repair, and generation of homoplasmic cells. mL67/MHR1 also acts as transcription factor involved in regulation of RNA polymerase II-dependent transcription. In Candida albicans (strain SC5314 / ATCC MYA-2876) (Yeast), this protein is Large ribosomal subunit protein mL67 (MHR1).